Reading from the N-terminus, the 307-residue chain is MVNPTTSEVHPTMGVKIFSAGVAACLADIITFPLDTAKVRLQIQGEGQISSTIRYKGVLGTITTLAKTEGLPKLYSGLPAGIQRQISFASLRIGLYDTVQEYFSSGKETPPTLGNRISAGLMTGGVAVFIGQPTEVVKVRLQAQSHLHGIKPRYTGTYNAYRIIATTESFSTLWKGTTPNLLRNVIINCVELVTYDLMKGALVNNQILADDVPCHLLSAFVAGFCTTFLASPADVVKTRFINSLPGQYPSVPSCAMTMLTKEGPTAFFKGFVPSFLRLASWNVIMFVCFEQLKKELSKSRQTVDCTT.

Over 2 to 10 (VNPTTSEVH) the chain is Mitochondrial intermembrane. A helical transmembrane segment spans residues 11 to 32 (PTMGVKIFSAGVAACLADIITF). 3 Solcar repeats span residues 11–102 (PTMG…VQEY), 111–201 (PTLG…MKGA), and 210–295 (DDVP…LKKE). Residues 33–73 (PLDTAKVRLQIQGEGQISSTIRYKGVLGTITTLAKTEGLPK) lie on the Mitochondrial matrix side of the membrane. Fatty acid 16:0 is bound at residue Lys56. Residues 74–96 (LYSGLPAGIQRQISFASLRIGLY) form a helical membrane-spanning segment. Residues 97–116 (DTVQEYFSSGKETPPTLGNR) are Mitochondrial intermembrane-facing. A helical transmembrane segment spans residues 117 to 133 (ISAGLMTGGVAVFIGQP). The Mitochondrial matrix portion of the chain corresponds to 134-178 (TEVVKVRLQAQSHLHGIKPRYTGTYNAYRIIATTESFSTLWKGTT). Residues 179–195 (PNLLRNVIINCVELVTY) form a helical membrane-spanning segment. Residues 196–212 (DLMKGALVNNQILADDV) are Mitochondrial intermembrane-facing. Residues 213 to 232 (PCHLLSAFVAGFCTTFLASP) form a helical membrane-spanning segment. At 233–266 (ADVVKTRFINSLPGQYPSVPSCAMTMLTKEGPTA) the chain is on the mitochondrial matrix side. Position 254 is a cysteine sulfenic acid (-SOH) (Cys254). A helical membrane pass occupies residues 267–289 (FFKGFVPSFLRLASWNVIMFVCF). Lys269 is a fatty acid 16:0 binding site. Residues 290 to 307 (EQLKKELSKSRQTVDCTT) lie on the Mitochondrial intermembrane side of the membrane.

This sequence belongs to the mitochondrial carrier (TC 2.A.29) family. As to quaternary structure, most probably functions as a monomer. Binds one purine nucleotide per monomer. However, has also been suggested to function as a homodimer or a homotetramer. Tightly associates with cardiolipin in the mitochondrion inner membrane; may stabilize and regulate its activity. Post-translationally, may undergo sulfenylation upon cold exposure. May increase the sensitivity of UCP1 thermogenic function to the activation by noradrenaline probably through structural effects. In terms of processing, may undergo ubiquitin-mediated proteasomal degradation. In terms of tissue distribution, brown adipose tissue.

It localises to the mitochondrion inner membrane. It carries out the reaction H(+)(in) = H(+)(out). Has no constitutive proton transporter activity and has to be activated by long-chain fatty acids/LCFAs. Inhibited by purine nucleotides. Both purine nucleotides and LCFAs bind the cytosolic side of the transporter and directly compete to activate or inhibit it. Activated by noradrenaline and reactive oxygen species. Despite lacking canonical translational encoding for selenocysteine, a small pool of the protein has been observed to selectively incorporate selenocysteine at 'Cys-254'. Selenocysteine-modified protein is highly sensitive to redox modification and may constitute a pool of protein highly sensitive to activation by elevated levels of reactive oxygen species (ROS). Functionally, mitochondrial protein responsible for thermogenic respiration, a specialized capacity of brown adipose tissue and beige fat that participates in non-shivering adaptive thermogenesis to temperature and diet variations and more generally to the regulation of energy balance. Functions as a long-chain fatty acid/LCFA and proton symporter, simultaneously transporting one LCFA and one proton through the inner mitochondrial membrane. However, LCFAs remaining associated with the transporter via their hydrophobic tails, it results in an apparent transport of protons activated by LCFAs. Thereby, dissipates the mitochondrial proton gradient and converts the energy of substrate oxydation into heat instead of ATP. Regulates the production of reactive oxygen species/ROS by mitochondria. In Mesocricetus auratus (Golden hamster), this protein is Mitochondrial brown fat uncoupling protein 1.